The sequence spans 248 residues: Large ribosomal subunit protein uL10m (248 aa).

The transit peptide at 1-24 directs the protein to the mitochondrion; sequence MATLIQRSLSLAKSSTPALQFLRF.

The protein belongs to the universal ribosomal protein uL10 family. In terms of assembly, component of the mitochondrial ribosome large subunit (39S) which comprises a 16S rRNA and about 50 distinct proteins.

The protein resides in the mitochondrion. The protein is Large ribosomal subunit protein uL10m (mRpL10) of Drosophila melanogaster (Fruit fly).